The sequence spans 72 residues: GSGFVAVEIPFTPRVLELSLEEARVLENLGADPSNIRFQPVKVPEPSVDETIQILKFLPDKAIDLIDEAGSR.

Belongs to the ClpA/ClpB family.

The protein localises to the plastid. The protein resides in the chloroplast. May interact with a ClpP-like protease involved in degradation of denatured proteins in the chloroplast. The sequence is that of ATP-dependent Clp protease ATP-binding subunit ClpA homolog from Populus euphratica (Euphrates poplar).